The primary structure comprises 261 residues: MAATNQPMIQLKDVSKIYDNGTVGLKDINLNIDKGEFVVVVGLSGAGKSTLLRSINRLQDVSKGDILIDGKSITSAKGKDLREIRRDIGMIFQSFNLVKRSSVLRNVLTGRVAYYPTWKTTFNLFTKEDKQKAYEALQRVDLADKVYTRADQLSGGQQQRVAIARVLTQNPKIILADEPTASLDPQTSRRVMHDLKMLNEEYGMTVVANLHSVELAKEFGDRVIGVRAGQIVYDGKMSETSQAVFDDIYNGGNGKKGEEDA.

The ABC transporter domain maps to 9 to 253 (IQLKDVSKIY…VFDDIYNGGN (245 aa)). 42–49 (GLSGAGKS) provides a ligand contact to ATP.

Belongs to the ABC transporter superfamily. Phosphonates importer (TC 3.A.1.9.1) family. The complex is composed of two ATP-binding proteins (PhnC), two transmembrane proteins (PhnE) and a solute-binding protein (PhnD).

It is found in the cell membrane. The catalysed reaction is phosphonate(out) + ATP + H2O = phosphonate(in) + ADP + phosphate + H(+). Its function is as follows. Part of the ABC transporter complex PhnCDE involved in phosphonates import. Responsible for energy coupling to the transport system. This is Phosphonates import ATP-binding protein PhnC from Lactobacillus gasseri (strain ATCC 33323 / DSM 20243 / BCRC 14619 / CIP 102991 / JCM 1131 / KCTC 3163 / NCIMB 11718 / NCTC 13722 / AM63).